The sequence spans 128 residues: Probable heavy metal-dependent transcriptional regulator HI_0293 (128 aa).

One can recognise an HTH merR-type domain in the interval 1-69 (MNISEAAKLV…LHQIAQLLAL (69 aa)). The H-T-H motif DNA-binding region spans 4 to 23 (SEAAKLVGLSTKQIRDYEKM).

The protein localises to the cytoplasm. Functionally, could be a copper-dependent transcriptional activator of the ATPase HI_0290. This chain is Probable heavy metal-dependent transcriptional regulator HI_0293, found in Haemophilus influenzae (strain ATCC 51907 / DSM 11121 / KW20 / Rd).